The chain runs to 1116 residues: MDAPASFSLGAMGPLLRKLDSLLVAPEIRLPKPLKEGIELLKEDLEEIGVSLVEHSVVDSPTHKARFWMDEVRDLSYHIEDCIDTMFSMRSGGDDGKPRSERRHKVGRAKIDGFSKKPKPCTRMARIAELRALVREASERLERYQLGDVCGSSSPVVFTADGRARPLHHGVSANLVGVDEFKTKLNRWLSDEEGPHLKVAAIVGPAGIGKTALATELYRDHRWQFECRAFVRASRKPDMQRLLGGILSQVQRRQRSSDAYADSTVQSLIDNLREHLQDRRYLIIIDGLWETAVWNIANSAFPDVNSFSRILITADIEQVALECCGYKYDYIMRMEPLGSLDSKKVFFNKVFGSEDQCPPELKEVSNTILEKCGGLPLAIISIAGLLGSQPENPVLWDYVTKYLCSSLGTNPTLKDVVKETLNLSYNSLPHPFKTCLLYLGMYPDGHIMLKADLMKQWSAEGFVSANEAKDTEEIVDKYFDELVNRGILEPVEINKNGKVLSCTLHHAVHDLVMPKFNDDKFTMSVDYSQTITGPSTMVRRLSLHFSSTRYATKPAGIILSRVRSLAFFGLLNCMPCIGEFKLLRVLILEFWGSHGEQRSLNLIPVCRLFQLRYLKTSGDVVVQLPAQISGLQYLETLEIDARVSAVPFDLVHLPNLLHLQLQDETKLPDGIGCMRSLRTLQYFDLGNNSVDNLRGLGELTNLQDLHLSYSAPSSNEGLMINLNAITSSLSRLSNLKSLILSPGAISMVIFFDISSIISVVPVFLQRLELLPPICIFCRLPKSIGQLHKLCILKVSVRELLTTDIDNLTGLPSLTVLSLYAQTAPEGRFIFKDGTLPVLKYFKFGCGELCLAFMAGAMPNLQRLKLVFNIRKSEKYRHTLFGIEHLVSLQDIATRIGVDTSTGESDRRAAESAFKETVNKHPRCLRSSLQWVVSTEEESHPLEKQHHKREKGSSAGHGVLEKESVEDSEKNTDRVQTLLSPQLSNMESVVESALTGQRTKIVVKVHMPCGKSRAKAMALAASVNGVDSVEITGEDKDRLVVVGRGIDPVRLVALLREKCGLAELLMVELVEKEKTQLAGGKKGAYKKHPTYNLSPFDYVEYPPSAPIMQDINPCSTM.

The tract at residues 1–177 is structured coiled coil (CC) domain; that stretch reads MDAPASFSLG…HHGVSANLVG (177 aa). Residues 182–466 enclose the NB-ARC domain; sequence KTKLNRWLSD…WSAEGFVSAN (285 aa). LRR repeat units follow at residues 608–631, 633–653, 654–675, 677–701, 732–755, 786–808, 810–830, 835–857, and 858–882; these read LFQL…ISGL, YLET…LVHL, PNLL…GCMR, LRTL…ELTN, LSNL…DISS, LHKL…DNLT, LPSL…RFIF, LPVL…AGAM, and PNLQ…LFGI. The tract at residues 935–971 is disordered; the sequence is EEESHPLEKQHHKREKGSSAGHGVLEKESVEDSEKNT. Positions 958-971 are enriched in basic and acidic residues; it reads VLEKESVEDSEKNT. Residues 997–1066 form the HMA domain; the sequence is RTKIVVKVHM…KCGLAELLMV (70 aa). Residues 1000–1070 form an HMA-like domain region; that stretch reads IVVKVHMPCG…AELLMVELVE (71 aa).

This sequence belongs to the disease resistance NB-LRR family. Forms homodimer or heterodimer with RGA4 through its coiled coil (CC) domain. Interacts with AVR1-Pia and AVR-CO39 through its C-terminal part containing the HMA-like domain. In terms of tissue distribution, expressed in leaves.

It localises to the cytoplasm. Functionally, disease resistance (R) protein that recognizes the AVR-Pia and AVR1-CO39 effector avirulence proteins from M.oryzae. Resistance proteins guard the plant against pathogens that contain an appropriate avirulence protein via an indirect interaction with this avirulence protein. That triggers a defense system including the hypersensitive response, which restricts the pathogen growth. Contribution of RGA4 is required to recognize the effector avirulence proteins AVR-Pia and AVR1-CO39 from M.oryzae. Acts as a repressor of the RGA4-mediated cell death activation. Upon infection, recognition and binding of the AVR effectors relieve the RGA5-mediated repression and triggers the hypersensitive response. Immune response triggered by the RGA4-RGA5 -mediated recognition of AVR1-CO39 confers resistance to X.oryzae pathovars. The sequence is that of Disease resistance protein RGA5 from Oryza sativa subsp. japonica (Rice).